We begin with the raw amino-acid sequence, 243 residues long: Adenosylcobinamide-GDP ribazoletransferase (243 aa).

The next 6 membrane-spanning stretches (helical) occupy residues 33 to 53 (FLPVIGLLIGILMYLPTLLAP), 59 to 79 (IIIVSIWALYFLITGGLHIDG), 105 to 125 (IGAFGVLGILWLLILNLTLAY), 127 to 147 (TENMLLLLVPVVGRASAVFAA), 172 to 192 (VISIAFSLLLGSMVSIKGAII), and 223 to 243 (TIEISQTLFMLSAYLLKSIII).

It belongs to the CobS family. Requires Mg(2+) as cofactor.

The protein localises to the cell membrane. It carries out the reaction alpha-ribazole + adenosylcob(III)inamide-GDP = adenosylcob(III)alamin + GMP + H(+). The enzyme catalyses alpha-ribazole 5'-phosphate + adenosylcob(III)inamide-GDP = adenosylcob(III)alamin 5'-phosphate + GMP + H(+). It functions in the pathway cofactor biosynthesis; adenosylcobalamin biosynthesis; adenosylcobalamin from cob(II)yrinate a,c-diamide: step 7/7. In terms of biological role, joins adenosylcobinamide-GDP and alpha-ribazole to generate adenosylcobalamin (Ado-cobalamin). Also synthesizes adenosylcobalamin 5'-phosphate from adenosylcobinamide-GDP and alpha-ribazole 5'-phosphate. The protein is Adenosylcobinamide-GDP ribazoletransferase of Alkaliphilus oremlandii (strain OhILAs) (Clostridium oremlandii (strain OhILAs)).